Reading from the N-terminus, the 360-residue chain is Peptide chain release factor 1 (360 aa).

Glutamine 233 is modified (N5-methylglutamine). The disordered stretch occupies residues 283–305 (KLDAERAADRRSQVGSGDRSERI).

It belongs to the prokaryotic/mitochondrial release factor family. In terms of processing, methylated by PrmC. Methylation increases the termination efficiency of RF1.

It localises to the cytoplasm. Functionally, peptide chain release factor 1 directs the termination of translation in response to the peptide chain termination codons UAG and UAA. This Methylocella silvestris (strain DSM 15510 / CIP 108128 / LMG 27833 / NCIMB 13906 / BL2) protein is Peptide chain release factor 1.